We begin with the raw amino-acid sequence, 1331 residues long: Sodium-dependent transporter bedraggled (1331 aa).

Residues M1–S62 are disordered. The segment covering N16–P25 has biased composition (polar residues). The span at T28–T43 shows a compositional bias: gly residues. N168 is a glycosylation site (N-linked (GlcNAc...) asparagine). Disordered regions lie at residues E221–V284 and Q363–S473. Residues K258–E282 show a composition bias toward polar residues. The span at S369–E383 shows a compositional bias: basic and acidic residues. Positions L413–M436 are enriched in polar residues. Low complexity predominate over residues P437–S453. A compositionally biased stretch (polar residues) spans V463–S473. Helical transmembrane passes span L505–I525, F531–M551, and I567–L587. N627 and N631 each carry an N-linked (GlcNAc...) asparagine glycan. Transmembrane regions (helical) follow at residues Q667 to L687, I696 to V716, T741 to I761, and A778 to C798. N-linked (GlcNAc...) asparagine glycosylation is present at N857. The chain crosses the membrane as a helical span at residues W890 to V910. N-linked (GlcNAc...) asparagine glycosylation is present at N921. The next 4 membrane-spanning stretches (helical) occupy residues V926–I946, L956–I976, A998–V1018, and M1044–I1064. 3 disordered regions span residues P1086 to T1136, S1169 to L1238, and V1256 to R1275. Composition is skewed to polar residues over residues A1097–G1115 and I1186–N1196. The span at A1197–S1209 shows a compositional bias: low complexity.

This sequence belongs to the sodium:neurotransmitter symporter (SNF) (TC 2.A.22) family.

It localises to the membrane. Functionally, putative sodium-dependent transporter which is required for viability, early imaginal disk development and adult motor coordination. Also has a role in the fate commitment of the R3/R4 photoreceptor cells. May function in ommatidial polarity by regulating the activity of the core polarity genes, acting upstream of (or in parallel to) Vang, dsh, pk, stan, and dgo, but downstream or independently of fz. In Drosophila melanogaster (Fruit fly), this protein is Sodium-dependent transporter bedraggled.